The primary structure comprises 469 residues: ATP synthase subunit beta (469 aa).

ATP is bound at residue 155 to 162; the sequence is GGAGVGKT.

It belongs to the ATPase alpha/beta chains family. F-type ATPases have 2 components, CF(1) - the catalytic core - and CF(0) - the membrane proton channel. CF(1) has five subunits: alpha(3), beta(3), gamma(1), delta(1), epsilon(1). CF(0) has three main subunits: a(1), b(2) and c(9-12). The alpha and beta chains form an alternating ring which encloses part of the gamma chain. CF(1) is attached to CF(0) by a central stalk formed by the gamma and epsilon chains, while a peripheral stalk is formed by the delta and b chains.

The protein resides in the cell inner membrane. The catalysed reaction is ATP + H2O + 4 H(+)(in) = ADP + phosphate + 5 H(+)(out). In terms of biological role, produces ATP from ADP in the presence of a proton gradient across the membrane. The catalytic sites are hosted primarily by the beta subunits. The sequence is that of ATP synthase subunit beta from Thermosipho melanesiensis (strain DSM 12029 / CIP 104789 / BI429).